The chain runs to 814 residues: Probable G-protein coupled receptor 156 (814 aa).

Residues 1–47 (MEPEINCSELCDSFPGQELDRRPLHDLCKTTITSSHHSSKTISSLSP) lie on the Extracellular side of the membrane. Residue Asn6 is glycosylated (N-linked (GlcNAc...) asparagine). Residues 48–68 (VLLGIVWTFLSCGLLLILFFL) form a helical membrane-spanning segment. Topologically, residues 69–86 (AFTIHCRKNRIVKMSSPN) are cytoplasmic. The chain crosses the membrane as a helical span at residues 87–107 (LNIVTLLGSCLTYSSAYLFGI). Residues 108–118 (QDVLVGSSMET) lie on the Extracellular side of the membrane. A helical transmembrane segment spans residues 119–139 (LIQTRLSMLCIGTSLVFGPIL). The Cytoplasmic portion of the chain corresponds to 140-164 (GKSWRLYKVFTQRVPDKRVIIKDLQ). Residues 165 to 185 (LLGLVAALLMADVILLMTWVL) form a helical membrane-spanning segment. Over 186–222 (TDPIQCLQILSVSMTVTGKDVSCTSTSTHFCASRYSD) the chain is Extracellular. The chain crosses the membrane as a helical span at residues 223-243 (VWIALIWGCKGLLLLYGAYLA). Topologically, residues 244-257 (GLTGHVSSPPVNQS) are cytoplasmic. The helical transmembrane segment at 258–278 (LTIMVGVNLLVLAAGLLFVVT) threads the bilayer. At 279-288 (RYLHSWPNLV) the chain is on the extracellular side. A helical membrane pass occupies residues 289–309 (FGLTSGGIFVCTTTINCFIFI). The Cytoplasmic portion of the chain corresponds to 310–814 (PQLKQWKAFE…FKDDLKPTLV (505 aa)). Residues 354–390 (EKSSMERLLTEKNAVIESLQEQVNNAKEKIVRLMSAE) adopt a coiled-coil conformation. 3 disordered regions span residues 422–545 (AQGP…SSVI), 557–724 (GLGP…PEQW), and 769–792 (SSSDSSDSGTSDTDPEPTGGLASW). The segment covering 443-454 (SQCTSGPSSYAQ) has biased composition (polar residues). Residues 468 to 484 (GKEEKISDSKDFSDHLD) show a composition bias toward basic and acidic residues. A compositionally biased stretch (polar residues) spans 486–496 (GCSQKPWTEQS). The span at 523-545 (QRQRHLENSEEPPERRSRVSSVI) shows a compositional bias: basic and acidic residues. Over residues 563 to 581 (SLSTAPSCHQQTWKNSAAF) the composition is skewed to polar residues. Basic residues predominate over residues 599–610 (VRRRRAAQRARS). The span at 639 to 651 (NGDSPSLAPQTTD) shows a compositional bias: polar residues. Residues 769–780 (SSSDSSDSGTSD) show a composition bias toward low complexity.

It belongs to the G-protein coupled receptor 3 family. GABA-B receptor subfamily. As to expression, ubiquitous expression both in the CNS and in peripheral tissues. Very high expression in fetal brain and testis relative to expression in other tissues.

Its subcellular location is the cell membrane. Orphan G-protein coupled receptor involved in the regulation of hair cell orientation in mechanosensory organs of the inner ear. It is required to trigger a 180 degree reversal in hair cell orientation, creating a virtual line of polarity reversal (LPR) across which stereociliary bundles are arranged in opposite orientations. The sequence is that of Probable G-protein coupled receptor 156 (GPR156) from Homo sapiens (Human).